Reading from the N-terminus, the 158-residue chain is 2-C-methyl-D-erythritol 2,4-cyclodiphosphate synthase (158 aa).

Asp9 and His11 together coordinate a divalent metal cation. 4-CDP-2-C-methyl-D-erythritol 2-phosphate contacts are provided by residues 9 to 11 (DVH) and 35 to 36 (HS). His43 serves as a coordination point for a divalent metal cation. Residues 57-59 (DIG), 62-66 (FPDTD), 101-107 (AQKPKML), 133-136 (TTTE), Phe140, and Arg143 each bind 4-CDP-2-C-methyl-D-erythritol 2-phosphate.

The protein belongs to the IspF family. Homotrimer. A divalent metal cation serves as cofactor.

The catalysed reaction is 4-CDP-2-C-methyl-D-erythritol 2-phosphate = 2-C-methyl-D-erythritol 2,4-cyclic diphosphate + CMP. Its pathway is isoprenoid biosynthesis; isopentenyl diphosphate biosynthesis via DXP pathway; isopentenyl diphosphate from 1-deoxy-D-xylulose 5-phosphate: step 4/6. In terms of biological role, involved in the biosynthesis of isopentenyl diphosphate (IPP) and dimethylallyl diphosphate (DMAPP), two major building blocks of isoprenoid compounds. Catalyzes the conversion of 4-diphosphocytidyl-2-C-methyl-D-erythritol 2-phosphate (CDP-ME2P) to 2-C-methyl-D-erythritol 2,4-cyclodiphosphate (ME-CPP) with a corresponding release of cytidine 5-monophosphate (CMP). This is 2-C-methyl-D-erythritol 2,4-cyclodiphosphate synthase from Bacillus subtilis (strain 168).